A 229-amino-acid polypeptide reads, in one-letter code: 7-cyano-7-deazaguanine synthase (229 aa).

8-18 (CSGGLDSSVIA) serves as a coordination point for ATP. The Zn(2+) site is built by C190, C203, C206, and C209.

Belongs to the QueC family. Requires Zn(2+) as cofactor.

The catalysed reaction is 7-carboxy-7-deazaguanine + NH4(+) + ATP = 7-cyano-7-deazaguanine + ADP + phosphate + H2O + H(+). It participates in purine metabolism; 7-cyano-7-deazaguanine biosynthesis. Catalyzes the ATP-dependent conversion of 7-carboxy-7-deazaguanine (CDG) to 7-cyano-7-deazaguanine (preQ(0)). This Methanopyrus kandleri (strain AV19 / DSM 6324 / JCM 9639 / NBRC 100938) protein is 7-cyano-7-deazaguanine synthase.